The primary structure comprises 180 residues: MKTIEVDEELYRFIASQTQHIGESASDILRRLLMQSSPSDLAVSAPVEVQKKGIVVSKDAGKEASVDRVKAVRTLLISDEFSALDKAIDRFLTVLSELYKIDSKAFSEATEVKGRTRVYFADNQETLIASGKTTKPREIVGTPFWVITNTNTNRKRHMVELLMERMGFQHDLTEKVCAAI.

The segment at R115–Y119 is interaction with DNA.

It belongs to the SeqA family. In terms of assembly, homodimer. Polymerizes to form helical filaments.

Its subcellular location is the cytoplasm. In terms of biological role, negative regulator of replication initiation, which contributes to regulation of DNA replication and ensures that replication initiation occurs exactly once per chromosome per cell cycle. Binds to pairs of hemimethylated GATC sequences in the oriC region, thus preventing assembly of replication proteins and re-initiation at newly replicated origins. Repression is relieved when the region becomes fully methylated. In Aliivibrio fischeri (strain ATCC 700601 / ES114) (Vibrio fischeri), this protein is Negative modulator of initiation of replication.